A 470-amino-acid chain; its full sequence is Siroheme synthase (470 aa).

The precorrin-2 dehydrogenase /sirohydrochlorin ferrochelatase stretch occupies residues 1–203 (MDYLPIFVEL…GQIQQAEKQL (203 aa)). NAD(+)-binding positions include 22–23 (EV) and 43–44 (PE). Residue Ser-128 is modified to Phosphoserine. The segment at 214–470 (GELALVGAGP…ISRPAVVDFA (257 aa)) is uroporphyrinogen-III C-methyltransferase. Pro-223 lines the S-adenosyl-L-methionine pocket. Asp-246 acts as the Proton acceptor in catalysis. The active-site Proton donor is Lys-268. S-adenosyl-L-methionine-binding positions include 299–301 (GGD), Ile-304, 329–330 (TA), Met-381, and Gly-410.

In the N-terminal section; belongs to the precorrin-2 dehydrogenase / sirohydrochlorin ferrochelatase family. It in the C-terminal section; belongs to the precorrin methyltransferase family.

It catalyses the reaction uroporphyrinogen III + 2 S-adenosyl-L-methionine = precorrin-2 + 2 S-adenosyl-L-homocysteine + H(+). It carries out the reaction precorrin-2 + NAD(+) = sirohydrochlorin + NADH + 2 H(+). The enzyme catalyses siroheme + 2 H(+) = sirohydrochlorin + Fe(2+). The protein operates within cofactor biosynthesis; adenosylcobalamin biosynthesis; precorrin-2 from uroporphyrinogen III: step 1/1. It functions in the pathway cofactor biosynthesis; adenosylcobalamin biosynthesis; sirohydrochlorin from precorrin-2: step 1/1. It participates in porphyrin-containing compound metabolism; siroheme biosynthesis; precorrin-2 from uroporphyrinogen III: step 1/1. Its pathway is porphyrin-containing compound metabolism; siroheme biosynthesis; siroheme from sirohydrochlorin: step 1/1. The protein operates within porphyrin-containing compound metabolism; siroheme biosynthesis; sirohydrochlorin from precorrin-2: step 1/1. In terms of biological role, multifunctional enzyme that catalyzes the SAM-dependent methylations of uroporphyrinogen III at position C-2 and C-7 to form precorrin-2 via precorrin-1. Then it catalyzes the NAD-dependent ring dehydrogenation of precorrin-2 to yield sirohydrochlorin. Finally, it catalyzes the ferrochelation of sirohydrochlorin to yield siroheme. This is Siroheme synthase from Photorhabdus laumondii subsp. laumondii (strain DSM 15139 / CIP 105565 / TT01) (Photorhabdus luminescens subsp. laumondii).